The chain runs to 466 residues: 3-isopropylmalate dehydratase large subunit (466 aa).

Cys347, Cys407, and Cys410 together coordinate [4Fe-4S] cluster.

The protein belongs to the aconitase/IPM isomerase family. LeuC type 1 subfamily. As to quaternary structure, heterodimer of LeuC and LeuD. It depends on [4Fe-4S] cluster as a cofactor.

The enzyme catalyses (2R,3S)-3-isopropylmalate = (2S)-2-isopropylmalate. It functions in the pathway amino-acid biosynthesis; L-leucine biosynthesis; L-leucine from 3-methyl-2-oxobutanoate: step 2/4. Catalyzes the isomerization between 2-isopropylmalate and 3-isopropylmalate, via the formation of 2-isopropylmaleate. The polypeptide is 3-isopropylmalate dehydratase large subunit (Escherichia coli O157:H7).